A 411-amino-acid polypeptide reads, in one-letter code: MGEHERVVCCSSDSLLAGLSRDSDDCVSHLCTPPLLAITSWAAKERSQYSPPPGEPGPSSDKALDCMTHWSRVLEPEIVNTASEQAGKSGAWEKEWDSEPQPHEGTPCSSSDVNKDHYHDQDLVKRNHCVAKKSLEPSSAKVKVKNTMIIPDSQKLLRCELESLRSQLQAQSKAFEFLNHSVTMLEKESCLQQIKIQQLEEVLSPTSRQGEKYGRKWSTEQELYGALAQGLQGLQKTLKEGEELQRARTTRCLQLLAREIRDSKKFLWEELELVREEVTFIYQKLQDQEDEISENLLNIQKMQKTQVKCRKVLTKMKQQAYDSWPEAEGVPTEGNGCCKDDLQKELGDIWSAVHSLQSSIDCLALSMGTRPRASSLRGQKGHQCKSSQCPSWDSDSDWERPFSKSGSYPPA.

Residues 84–113 are disordered; sequence EQAGKSGAWEKEWDSEPQPHEGTPCSSSDV. Over residues 91-102 the composition is skewed to basic and acidic residues; it reads AWEKEWDSEPQP. Positions 269–305 form a coiled coil; sequence EELELVREEVTFIYQKLQDQEDEISENLLNIQKMQKT. Residues 372–411 are disordered; the sequence is RASSLRGQKGHQCKSSQCPSWDSDSDWERPFSKSGSYPPA. Over residues 384–393 the composition is skewed to polar residues; the sequence is CKSSQCPSWD.

As to quaternary structure, interacts with DYNLT2. Interacts with GGNBP1. Interacts with OSBP2. In terms of tissue distribution, expressed in spermatids but undetectable in the spermatozoon (at protein level). Highly expressed in the testis (at protein level).

Functionally, functions during spermatid development; may participate in the centrosome reduction procedure of spermatids and is required for the formation of the connecting piece/sperm head-tail coupling apparatus (HTCA) and the correct and tight attachment of the flagellum to the nuclear envelope. This is Coiled-coil domain-containing protein 159 (Ccdc159) from Mus musculus (Mouse).